We begin with the raw amino-acid sequence, 355 residues long: Holliday junction branch migration complex subunit RuvB (355 aa).

The interval 4-195 (TDKLTGADRL…FGIVARLEFY (192 aa)) is large ATPase domain (RuvB-L). ATP is bound by residues leucine 34, arginine 35, glycine 76, lysine 79, threonine 80, threonine 81, 142-144 (EDY), arginine 185, tyrosine 195, and arginine 232. Residue threonine 80 participates in Mg(2+) binding. The small ATPAse domain (RuvB-S) stretch occupies residues 196–266 (TPDELARIVA…LADAALEMLD (71 aa)). A head domain (RuvB-H) region spans residues 269–355 (SVGFDLMDRK…DGGADLAEGL (87 aa)). DNA-binding residues include arginine 305, arginine 324, and arginine 329.

Belongs to the RuvB family. As to quaternary structure, homohexamer. Forms an RuvA(8)-RuvB(12)-Holliday junction (HJ) complex. HJ DNA is sandwiched between 2 RuvA tetramers; dsDNA enters through RuvA and exits via RuvB. An RuvB hexamer assembles on each DNA strand where it exits the tetramer. Each RuvB hexamer is contacted by two RuvA subunits (via domain III) on 2 adjacent RuvB subunits; this complex drives branch migration. In the full resolvosome a probable DNA-RuvA(4)-RuvB(12)-RuvC(2) complex forms which resolves the HJ.

It localises to the cytoplasm. The catalysed reaction is ATP + H2O = ADP + phosphate + H(+). The RuvA-RuvB-RuvC complex processes Holliday junction (HJ) DNA during genetic recombination and DNA repair, while the RuvA-RuvB complex plays an important role in the rescue of blocked DNA replication forks via replication fork reversal (RFR). RuvA specifically binds to HJ cruciform DNA, conferring on it an open structure. The RuvB hexamer acts as an ATP-dependent pump, pulling dsDNA into and through the RuvAB complex. RuvB forms 2 homohexamers on either side of HJ DNA bound by 1 or 2 RuvA tetramers; 4 subunits per hexamer contact DNA at a time. Coordinated motions by a converter formed by DNA-disengaged RuvB subunits stimulates ATP hydrolysis and nucleotide exchange. Immobilization of the converter enables RuvB to convert the ATP-contained energy into a lever motion, pulling 2 nucleotides of DNA out of the RuvA tetramer per ATP hydrolyzed, thus driving DNA branch migration. The RuvB motors rotate together with the DNA substrate, which together with the progressing nucleotide cycle form the mechanistic basis for DNA recombination by continuous HJ branch migration. Branch migration allows RuvC to scan DNA until it finds its consensus sequence, where it cleaves and resolves cruciform DNA. The protein is Holliday junction branch migration complex subunit RuvB of Cupriavidus metallidurans (strain ATCC 43123 / DSM 2839 / NBRC 102507 / CH34) (Ralstonia metallidurans).